The chain runs to 439 residues: Type I secretion system membrane fusion protein PrsE (439 aa).

The helical transmembrane segment at 20–40 (LIGVSVLALALVAGVGGWAAT) threads the bilayer.

The protein belongs to the membrane fusion protein (MFP) (TC 8.A.1) family. Part of a type I secretion system composed of PrsD and PrsE.

The protein resides in the cell inner membrane. Its function is as follows. Mediates secretion of glycanase ExsH. The chain is Type I secretion system membrane fusion protein PrsE (prsE) from Rhizobium meliloti (strain 1021) (Ensifer meliloti).